A 400-amino-acid polypeptide reads, in one-letter code: Acetate kinase (400 aa).

Position 10 (Asn10) interacts with Mg(2+). Lys17 contributes to the ATP binding site. Arg91 serves as a coordination point for substrate. Catalysis depends on Asp150, which acts as the Proton donor/acceptor. ATP-binding positions include 210-214 (HLGNG), 285-287 (DCR), and 333-337 (GIGEN). Glu387 is a Mg(2+) binding site.

The protein belongs to the acetokinase family. Homodimer. Mg(2+) is required as a cofactor. Requires Mn(2+) as cofactor.

The protein resides in the cytoplasm. The enzyme catalyses acetate + ATP = acetyl phosphate + ADP. Its pathway is metabolic intermediate biosynthesis; acetyl-CoA biosynthesis; acetyl-CoA from acetate: step 1/2. In terms of biological role, catalyzes the formation of acetyl phosphate from acetate and ATP. Can also catalyze the reverse reaction. In Pectobacterium carotovorum subsp. carotovorum (strain PC1), this protein is Acetate kinase.